Reading from the N-terminus, the 444-residue chain is Endoglucanase N (444 aa).

The first 31 residues, 1-31 (MWMRRNQIVRKLTLGVVTTVLGMSLSFSALS), serve as a signal peptide directing secretion. Substrate-binding positions include His-64, 68 to 69 (WF), Tyr-95, and His-130. The Proton donor role is filled by Glu-168. Residue Tyr-230 participates in substrate binding. Glu-256 (nucleophile) is an active-site residue. Residues 262 to 263 (AS), Trp-290, and 295 to 297 (KSE) each bind substrate. A disordered region spans residues 332-358 (ANLGGGDTPTTPTTPTEPTNPGNGTTG). Over residues 339-358 (TPTTPTTPTEPTNPGNGTTG) the composition is skewed to low complexity. Residues 356–444 (TTGDVVLQYR…DKANRYVLVT (89 aa)) enclose the CBM3 domain.

The protein belongs to the glycosyl hydrolase 5 (cellulase A) family.

It localises to the secreted. The enzyme catalyses Endohydrolysis of (1-&gt;4)-beta-D-glucosidic linkages in cellulose, lichenin and cereal beta-D-glucans.. The sequence is that of Endoglucanase N (celN) from Pectobacterium atrosepticum (Erwinia carotovora subsp. atroseptica).